Here is a 267-residue protein sequence, read N- to C-terminus: Heme-containing CO-sensing transcriptional regulator RcoM 1 (267 aa).

A PAS domain is found at 15–86 (RAETFQHKLE…KSRDKLRFLL (72 aa)). Heme-binding residues include His74 and Met104. The region spanning 161-266 (IPVYRKNRVI…TAQLKELLGV (106 aa)) is the HTH LytTR-type domain.

Heme is required as a cofactor.

The protein resides in the cytoplasm. Its function is as follows. One-component, b-type heme-containing aerobic sensor and transcriptional regulator that responds to CO by activating the expression of the oxidation operon cox. This Paraburkholderia xenovorans (strain LB400) protein is Heme-containing CO-sensing transcriptional regulator RcoM 1 (rcoM1).